Reading from the N-terminus, the 355-residue chain is Glucokinase (355 aa).

Residue 11–16 participates in ATP binding; that stretch reads GDIGGT.

The protein belongs to the bacterial glucokinase family.

It is found in the cytoplasm. The enzyme catalyses D-glucose + ATP = D-glucose 6-phosphate + ADP + H(+). The protein is Glucokinase of Synechocystis sp. (strain ATCC 27184 / PCC 6803 / Kazusa).